The following is a 549-amino-acid chain: MEADFVIIGSGSAGSAMAYRLSEDGRYSVIVIEYGVPDVGPLIQMPAALSFPMNMETYDWGFSSEPEPHIGGRSLVTPRGKVLGGSSSINGMVYVRGHACDFDHWSQSGARGWAYADVLPYFKRMENSQGGQEGWRGTNGPLYVQRGKRDNPLFHAFVEAGHQAGFEVTDDYNGEKQEGFGPMEQTIHNGRRWSAANAYLKPALKRPNVKLVKGFARKIVLEGKRAVGVEIEAGRTFSTIRARREVIIAASSINSPKLLMLSGIGPAAHLKEHGIDLVADRPGVGQNLQDHLEVYIQQECTQPITLYSKLNLFSKARIGVEWLLFKTGDGATNHFESAAFVRSKAGVEYPDIQYHFLPVAIRYDGKAAAQSHGFQAHVGPMRSKSRGSVTLRSANPREKPVIKFNYMSHEDDWADFRHCVRLTREIFGQAAFDPYRGAEIQPGAHVQTDDEIDNFIREHVESAFHPCGTCKMGAVDDPMAVVDPECRVIGVEGLRVADSSIFPRITNGNLNGPSIMVGEKASDHILGRTPLARSNQEPWINPRWQVSDR.

Residue 4 to 33 (DFVIIGSGSAGSAMAYRLSEDGRYSVIVIE) coordinates FAD. The active-site Proton acceptor is the His-465.

It belongs to the GMC oxidoreductase family. It depends on FAD as a cofactor.

The catalysed reaction is choline + A = betaine aldehyde + AH2. It catalyses the reaction betaine aldehyde + NAD(+) + H2O = glycine betaine + NADH + 2 H(+). It functions in the pathway amine and polyamine biosynthesis; betaine biosynthesis via choline pathway; betaine aldehyde from choline (cytochrome c reductase route): step 1/1. Functionally, involved in the biosynthesis of the osmoprotectant glycine betaine. Catalyzes the oxidation of choline to betaine aldehyde and betaine aldehyde to glycine betaine at the same rate. The polypeptide is Oxygen-dependent choline dehydrogenase (Brucella ovis (strain ATCC 25840 / 63/290 / NCTC 10512)).